The chain runs to 497 residues: 4,4'-diaponeurosporene oxygenase (497 aa).

7–19 serves as a coordination point for FAD; sequence VIGGGLGGISAAI.

This sequence belongs to the carotenoid/retinoid oxidoreductase family. CrtP subfamily. Requires FAD as cofactor.

It carries out the reaction all-trans-4,4'-diaponeurosporene + 2 AH2 + 2 O2 = 4,4'-diaponeurosporenal + 2 A + 3 H2O. Its pathway is carotenoid biosynthesis; staphyloxanthin biosynthesis; staphyloxanthin from farnesyl diphosphate: step 3/5. Functionally, involved in the biosynthesis of the yellow-orange carotenoid staphyloxanthin, which plays a role in the virulence via its protective function against oxidative stress. Catalyzes the oxidation of the terminal methyl side group of 4,4'-diaponeurosporene to form 4,4'-diaponeurosporen-4-al. This Staphylococcus aureus (strain MSSA476) protein is 4,4'-diaponeurosporene oxygenase.